Reading from the N-terminus, the 210-residue chain is Ribosomal RNA large subunit methyltransferase E (210 aa).

5 residues coordinate S-adenosyl-L-methionine: Gly64, Trp66, Asp84, Asn100, and Asp125. Lys165 serves as the catalytic Proton acceptor.

Belongs to the class I-like SAM-binding methyltransferase superfamily. RNA methyltransferase RlmE family.

It localises to the cytoplasm. It carries out the reaction uridine(2552) in 23S rRNA + S-adenosyl-L-methionine = 2'-O-methyluridine(2552) in 23S rRNA + S-adenosyl-L-homocysteine + H(+). Functionally, specifically methylates the uridine in position 2552 of 23S rRNA at the 2'-O position of the ribose in the fully assembled 50S ribosomal subunit. The chain is Ribosomal RNA large subunit methyltransferase E from Buchnera aphidicola subsp. Baizongia pistaciae (strain Bp).